The sequence spans 479 residues: Poly(A) polymerase catalytic subunit (479 aa).

Residues Asp202 and Asp204 contribute to the active site. Ca(2+)-binding residues include Asp202, Asp204, and Asp253.

Belongs to the poxviridae poly(A) polymerase catalytic subunit family. As to quaternary structure, heterodimer of a large (catalytic) subunit and a small (regulatory) subunit.

It catalyses the reaction RNA(n) + ATP = RNA(n)-3'-adenine ribonucleotide + diphosphate. Polymerase that creates the 3'-poly(A) tail of mRNA's. The protein is Poly(A) polymerase catalytic subunit (OPG063) of Homo sapiens (Human).